Here is a 196-residue protein sequence, read N- to C-terminus: Lipoprotein signal peptidase (196 aa).

Transmembrane regions (helical) follow at residues isoleucine 75–serine 95 and threonine 97–aspartate 117. Active-site residues include aspartate 126 and aspartate 144. A helical transmembrane segment spans residues tyrosine 135–valine 155.

This sequence belongs to the peptidase A8 family.

The protein resides in the cell inner membrane. It carries out the reaction Release of signal peptides from bacterial membrane prolipoproteins. Hydrolyzes -Xaa-Yaa-Zaa-|-(S,diacylglyceryl)Cys-, in which Xaa is hydrophobic (preferably Leu), and Yaa (Ala or Ser) and Zaa (Gly or Ala) have small, neutral side chains.. The protein operates within protein modification; lipoprotein biosynthesis (signal peptide cleavage). In terms of biological role, this protein specifically catalyzes the removal of signal peptides from prolipoproteins. This chain is Lipoprotein signal peptidase, found in Rickettsia bellii (strain OSU 85-389).